Reading from the N-terminus, the 481-residue chain is NADH-quinone oxidoreductase subunit N (481 aa).

The next 13 membrane-spanning stretches (helical) occupy residues 9 to 29 (MLPE…GIVV), 39 to 59 (AVSM…DHVA), 76 to 96 (CISR…FLCA), 104 to 124 (FSVV…AGHF), 158 to 178 (FFIL…LVYG), 205 to 225 (AFVL…MWAV), 232 to 252 (PMAA…LLLA), 265 to 285 (ILYG…LGAL), 293 to 313 (LLAY…VLHG), 318 to 338 (AIFH…SVLL), 359 to 379 (FVAF…PFLG), 399 to 419 (VAFP…FYCF), and 443 to 463 (LGLT…LFLA).

This sequence belongs to the complex I subunit 2 family. In terms of assembly, NDH-1 is composed of 14 different subunits. Subunits NuoA, H, J, K, L, M, N constitute the membrane sector of the complex.

The protein resides in the cell inner membrane. It carries out the reaction a quinone + NADH + 5 H(+)(in) = a quinol + NAD(+) + 4 H(+)(out). Functionally, NDH-1 shuttles electrons from NADH, via FMN and iron-sulfur (Fe-S) centers, to quinones in the respiratory chain. The immediate electron acceptor for the enzyme in this species is believed to be ubiquinone. Couples the redox reaction to proton translocation (for every two electrons transferred, four hydrogen ions are translocated across the cytoplasmic membrane), and thus conserves the redox energy in a proton gradient. This chain is NADH-quinone oxidoreductase subunit N, found in Anaplasma marginale (strain Florida).